The primary structure comprises 570 residues: 2-isopropylmalate synthase (570 aa).

A Pyruvate carboxyltransferase domain is found at 31-305; that stretch reads PIWMSTDLRD…DPELDFSHIN (275 aa). Mg(2+)-binding residues include Asp40, His244, His246, and Asn280. The regulatory domain stretch occupies residues 437–570; the sequence is SDGAIGYVSH…RRSSAQATVA (134 aa).

The protein belongs to the alpha-IPM synthase/homocitrate synthase family. LeuA type 2 subfamily. In terms of assembly, homodimer. Mg(2+) serves as cofactor.

The protein resides in the cytoplasm. The catalysed reaction is 3-methyl-2-oxobutanoate + acetyl-CoA + H2O = (2S)-2-isopropylmalate + CoA + H(+). Its pathway is amino-acid biosynthesis; L-leucine biosynthesis; L-leucine from 3-methyl-2-oxobutanoate: step 1/4. Catalyzes the condensation of the acetyl group of acetyl-CoA with 3-methyl-2-oxobutanoate (2-ketoisovalerate) to form 3-carboxy-3-hydroxy-4-methylpentanoate (2-isopropylmalate). The protein is 2-isopropylmalate synthase of Ralstonia pickettii (strain 12J).